The following is a 353-amino-acid chain: Probable butyrate kinase (353 aa).

This sequence belongs to the acetokinase family.

Its subcellular location is the cytoplasm. It catalyses the reaction butanoate + ATP = butanoyl phosphate + ADP. This chain is Probable butyrate kinase, found in Bacteroides thetaiotaomicron (strain ATCC 29148 / DSM 2079 / JCM 5827 / CCUG 10774 / NCTC 10582 / VPI-5482 / E50).